Here is a 231-residue protein sequence, read N- to C-terminus: Ureidoacrylate amidohydrolase RutB (231 aa).

Asp-25 (proton acceptor) is an active-site residue. The active site involves Lys-134. The Nucleophile role is filled by Cys-167.

It belongs to the isochorismatase family. RutB subfamily.

It catalyses the reaction (Z)-3-ureidoacrylate + H2O + H(+) = (Z)-3-aminoacrylate + NH4(+) + CO2. It carries out the reaction (Z)-3-ureidoacrylate + H2O = (Z)-3-aminoacrylate + carbamate + H(+). The catalysed reaction is (Z)-2-methylureidoacrylate + H2O + H(+) = (Z)-2-methylaminoacrylate + NH4(+) + CO2. In terms of biological role, hydrolyzes ureidoacrylate to form aminoacrylate and carbamate. The carbamate hydrolyzes spontaneously, thereby releasing one of the nitrogen atoms of the pyrimidine ring as ammonia and one of its carbon atoms as CO2. The sequence is that of Ureidoacrylate amidohydrolase RutB from Escherichia coli O18:K1:H7 (strain IHE3034 / ExPEC).